The primary structure comprises 395 residues: Mannan polymerase complexes subunit MNN9 (395 aa).

Residues 2–17 lie on the Cytoplasmic side of the membrane; sequence SLSLVSYRLRKNPWVN. The helical; Signal-anchor for type II membrane protein transmembrane segment at 18-33 threads the bilayer; the sequence is IFLPVLAIFLIYIIFF. Over 34 to 395 the chain is Lumenal; it reads QRDQSLLGLN…LVYHIEEENH (362 aa).

This sequence belongs to the ANP1/MMN9/VAN1 family. In terms of assembly, the M-Pol I complex contains MNN9 and VAN1. The M-Pol II complex is composed of ANP1, MNN9, MNN10, MNN11 and HOC1.

It is found in the endoplasmic reticulum membrane. It localises to the golgi apparatus membrane. It participates in protein modification; protein glycosylation. Its function is as follows. The M-Pol I and M-Pol II complexes possess alpha-1,6-mannosyltransferase activity and are probably involved in the elongation of the mannan backbone of N-linked glycans on cell wall and periplasmic proteins. May also provide alpha-1,2-mannosyltransferase activity to the M-Pol I complex. This Saccharomyces cerevisiae (strain ATCC 204508 / S288c) (Baker's yeast) protein is Mannan polymerase complexes subunit MNN9 (MNN9).